The chain runs to 374 residues: Pectate lyase 3 (374 aa).

The first 22 residues, Met1–Ala22, serve as a signal peptide directing secretion. Cysteines 93 and 176 form a disulfide. Residues Asp150, Asp152, Glu187, and Asp191 each contribute to the Ca(2+) site. Arg239 is an active-site residue. A disulfide bridge connects residues Cys350 and Cys373.

This sequence belongs to the polysaccharide lyase 1 family. PLADES subfamily. Ca(2+) is required as a cofactor.

The protein resides in the secreted. It catalyses the reaction Eliminative cleavage of (1-&gt;4)-alpha-D-galacturonan to give oligosaccharides with 4-deoxy-alpha-D-galact-4-enuronosyl groups at their non-reducing ends.. It functions in the pathway glycan metabolism; pectin degradation; 2-dehydro-3-deoxy-D-gluconate from pectin: step 2/5. Involved in maceration and soft-rotting of plant tissue. The sequence is that of Pectate lyase 3 (pel3) from Pectobacterium carotovorum subsp. carotovorum (Erwinia carotovora subsp. carotovora).